Here is a 51-residue protein sequence, read N- to C-terminus: uncharacterized protein (51 aa).

This sequence to E.coli YdfA.

This is an uncharacterized protein from Escherichia coli O157:H7.